Reading from the N-terminus, the 92-residue chain is Small ribosomal subunit protein uS19c (92 aa).

This sequence belongs to the universal ribosomal protein uS19 family.

It is found in the plastid. The protein resides in the chloroplast. Its function is as follows. Protein S19 forms a complex with S13 that binds strongly to the 16S ribosomal RNA. The polypeptide is Small ribosomal subunit protein uS19c (Dioscorea elephantipes (Elephant's foot yam)).